We begin with the raw amino-acid sequence, 1434 residues long: Probable ATP-dependent DNA helicase HFM1 (1434 aa).

Positions 289–476 (DDLLYTDRNF…WLSDGERPAV (188 aa)) constitute a Helicase ATP-binding domain. 302–309 (APTGSGKT) lines the ATP pocket. The short motif at 410 to 413 (DEVH) is the DEAH box element. Residues 514–718 (KVYSVIRTYS…DVNIALDWIR (205 aa)) form the Helicase C-terminal domain. The SEC63 domain occupies 775–1089 (PTEAGRLMAW…VGLDIHQKFT (315 aa)). The interval 1110–1130 (TDISHSDYSGRATATGSSKGM) is disordered. The segment at 1141 to 1156 (CHHHCKNKHACGHDCC) adopts a C4-type zinc-finger fold. Residues 1294–1333 (GFGDTRDSSLGGSKLPFQKSSSRFQRDNSNSFASSPGKPD) are disordered. A compositionally biased stretch (polar residues) spans 1311-1327 (QKSSSRFQRDNSNSFAS).

The protein belongs to the helicase family. SKI2 subfamily. It depends on Zn(2+) as a cofactor.

The catalysed reaction is Couples ATP hydrolysis with the unwinding of duplex DNA by translocating in the 3'-5' direction.. It carries out the reaction ATP + H2O = ADP + phosphate + H(+). Required for crossover formation and complete synapsis of homologous chromosomes during meiosis. This Mus musculus (Mouse) protein is Probable ATP-dependent DNA helicase HFM1.